The following is a 606-amino-acid chain: Ectonucleoside triphosphate diphosphohydrolase 7 (606 aa).

Over Met-1–Arg-28 the chain is Cytoplasmic. Residues Val-29 to Leu-49 traverse the membrane as a helical segment. Topologically, residues Arg-50 to Ser-548 are vesicular. Glu-217 functions as the Proton acceptor in the catalytic mechanism. Asn-330 carries N-linked (GlcNAc...) asparagine glycosylation. The cysteines at positions 448 and 477 are disulfide-linked. A helical transmembrane segment spans residues Phe-549–Leu-569. Over Tyr-570 to Pro-606 the chain is Cytoplasmic.

Belongs to the GDA1/CD39 NTPase family. Ca(2+) serves as cofactor. The cofactor is Mg(2+). As to expression, widely expressed. Expressed at high level in brain, kidney, liver, testis and small intestin. Weakly expressed in lung, thymus and heart.

The protein localises to the cytoplasmic vesicle membrane. The enzyme catalyses a ribonucleoside 5'-triphosphate + H2O = a ribonucleoside 5'-diphosphate + phosphate + H(+). It catalyses the reaction UTP + H2O = UDP + phosphate + H(+). The catalysed reaction is GTP + H2O = GDP + phosphate + H(+). It carries out the reaction CTP + H2O = CDP + phosphate + H(+). The enzyme catalyses ATP + H2O = ADP + phosphate + H(+). In terms of biological role, catalyzes the hydrolysis of nucleoside triphosphates and diphosphates in a calcium- or magnesium-dependent manner. Preferentially hydrolyzes nucleoside 5'-triphosphates, with substrate preference for UTP &gt; GTP &gt; CTP. Hydrolyzes nucleoside diphosphates only to a minor extent. In contrast to its human ortholog is able to hydrolyze ATP. In the epithelial cells of small intestine controls luminal ATP levels, therefore regulating Th17-cell development. In Mus musculus (Mouse), this protein is Ectonucleoside triphosphate diphosphohydrolase 7 (Entpd7).